A 410-amino-acid chain; its full sequence is D-amino acid dehydrogenase (410 aa).

An FAD-binding site is contributed by 9 to 14; it reads GGGIVG.

It belongs to the DadA oxidoreductase family. The cofactor is FAD.

It localises to the cell inner membrane. It carries out the reaction a D-alpha-amino acid + a quinone + H2O = a 2-oxocarboxylate + a quinol + NH4(+). With respect to regulation, activity is markedly inhibited by benzoate, and moderately by SH reagents such as p-hydroxymercuribenzoate, iodoacetamide, and iodoacetate. Catalyzes the oxidative deamination of D-amino acids. Has broad substrate specificity; is mostly active on D-proline, and to a lesser extent, on several other D-amino acids such as D-alanine, D-phenylalanine and D-serine. Mediates electron transport from D-proline to coenzyme Q1 in vitro, and is involved in the electron transport chain from D-proline to the c-type cytochrome in vivo. This is D-amino acid dehydrogenase from Helicobacter pylori (Campylobacter pylori).